Consider the following 428-residue polypeptide: Putative aspergillopepsin A-like aspartic endopeptidase AFUA_2G15950 (428 aa).

An N-terminal signal peptide occupies residues 1–19 (MHSLQSFLFLLLLGYGVFA). The propeptide at 20-90 (APTSPQAQSQ…GTAANLVTDV (71 aa)) is activation peptide. Residues 110–425 (FVSPVTIGGQ…DLRGPSIGLA (316 aa)) enclose the Peptidase A1 domain. The active site involves Asp126. Residue Asn276 is glycosylated (N-linked (GlcNAc...) asparagine). The active site involves Asp312. Residue Asn380 is glycosylated (N-linked (GlcNAc...) asparagine).

This sequence belongs to the peptidase A1 family.

The protein localises to the secreted. This is Putative aspergillopepsin A-like aspartic endopeptidase AFUA_2G15950 from Aspergillus fumigatus (strain ATCC MYA-4609 / CBS 101355 / FGSC A1100 / Af293) (Neosartorya fumigata).